The following is a 165-amino-acid chain: 3-hydroxyacyl-[acyl-carrier-protein] dehydratase FERN, mitochondrial (165 aa).

Residues 1-35 (MLMKRLFSSSHVFSSSSASSNLLKIGSVLKQARTF) constitute a mitochondrion transit peptide. The 89-residue stretch at 36–124 (ADDDVLGYSK…AVSIRQIKNK (89 aa)) folds into the MaoC-like domain.

Homodimer.

The protein localises to the mitochondrion. It catalyses the reaction a (3R)-hydroxyacyl-[ACP] = a (2E)-enoyl-[ACP] + H2O. It participates in lipid metabolism; fatty acid biosynthesis. 3-hydroxyl-[acyl-carrier-protein] (3-hydroxyl-ACP) dehydratase required for mitochondrial fatty acid synthesis (mtFAS). Essential for photorespiration, tomato morphogenesis and plant development, probably by influencing mitochondrial membrane lipid composition and other lipid metabolic pathways, and by contributing to energy supply and reactive oxygen species (ROS) homeostasis. This Solanum lycopersicum (Tomato) protein is 3-hydroxyacyl-[acyl-carrier-protein] dehydratase FERN, mitochondrial.